The following is a 150-amino-acid chain: Transcriptional repressor NrdR (150 aa).

A zinc finger lies at Cys-3–Cys-34. In terms of domain architecture, ATP-cone spans Ile-49 to Glu-139.

Belongs to the NrdR family. Zn(2+) serves as cofactor.

In terms of biological role, negatively regulates transcription of bacterial ribonucleotide reductase nrd genes and operons by binding to NrdR-boxes. This is Transcriptional repressor NrdR from Dictyoglomus thermophilum (strain ATCC 35947 / DSM 3960 / H-6-12).